The sequence spans 221 residues: Queuosine precursor transporter (221 aa).

The Cytoplasmic portion of the chain corresponds to 1–12 (MNVFSQTQRYKA). A helical transmembrane segment spans residues 13 to 33 (LFWLSLFHLLVITSSNYLVQL). Proline 34 is a topological domain (periplasmic). Residues 35–55 (VSILGFHTTWGAFSFPFIFLA) traverse the membrane as a helical segment. Over 56–70 (TDLTVRIFGAPLARR) the chain is Cytoplasmic. A helical membrane pass occupies residues 71–91 (IIFAVMIPALLISYVISSLFY). At 92–97 (MGSWQG) the chain is on the periplasmic side. A helical membrane pass occupies residues 98-118 (FGALAHFNLFVARIATASFMA). Over 119–143 (YALGQILDVHVFNRLRQSRRWWLAP) the chain is Cytoplasmic. A helical membrane pass occupies residues 144-164 (TASTLFGNVSDTLAFFFIAFW). Residues 165 to 184 (RSPDAFMAEHWMEIALVDYC) are Periplasmic-facing. A helical transmembrane segment spans residues 185-205 (FKVLISIVFFLPMYGVLLNML). Over 206–221 (LKRLADKSEINALQAS) the chain is Cytoplasmic.

Belongs to the vitamin uptake transporter (VUT/ECF) (TC 2.A.88) family. Q precursor transporter subfamily.

The protein localises to the cell inner membrane. Involved in the import of queuosine (Q) precursors, required for Q precursor salvage. Transports 7-cyano-7-deazaguanine (preQ(0)) and 7-aminomethyl-7-deazaguanine (preQ(1)), with a preference for preQ(0). This is Queuosine precursor transporter (yhhQ) from Escherichia coli (strain K12).